A 204-amino-acid chain; its full sequence is Somatotropin (204 aa).

A signal peptide spans 1–17 (MDRVVLMLSVMSLGVSS). Gln18 carries the post-translational modification Pyrrolidone carboxylic acid. His36 contributes to the Zn(2+) binding site. Cys69 and Cys177 are oxidised to a cystine. Residue Glu186 coordinates Zn(2+). A disulfide bond links Cys194 and Cys202.

The protein belongs to the somatotropin/prolactin family.

Its subcellular location is the secreted. Growth hormone plays an important role in growth control and is involved in the regulation of several anabolic processes. Implicated as an osmoregulatory substance important for seawater adaptation. The sequence is that of Somatotropin (gh) from Sparus aurata (Gilthead sea bream).